A 611-amino-acid polypeptide reads, in one-letter code: Protein Spindly (611 aa).

A coiled-coil region spans residues 1–288; sequence MEESETVLKL…QFQSLQKQHA (288 aa). The segment covering 499–511 has biased composition (basic and acidic residues); the sequence is LKEDSSLSTKEQD. The segment at 499-611 is disordered; the sequence is LKEDSSLSTK…PAATTQCPQQ (113 aa). The span at 549–567 shows a compositional bias: polar residues; sequence RNTNNCSVTSTSPRSASEE. Residues 570-583 are compositionally biased toward basic and acidic residues; it reads SESKRFDEEQEKRK.

This sequence belongs to the Spindly family.

The protein resides in the chromosome. It is found in the centromere. Its subcellular location is the kinetochore. In terms of biological role, required for the localization of dynein and dynactin to the mitotic kintochore. Dynein is believed to control the initial lateral interaction between the kinetochore and spindle microtubules and to facilitate the subsequent formation of end-on kinetochore-microtubule attachments mediated by the NDC80 complex. May act as an adapter protein linking the dynein motor complex to various cargos. The sequence is that of Protein Spindly (spdl1) from Xenopus tropicalis (Western clawed frog).